The sequence spans 452 residues: Phosphoglucosamine mutase (452 aa).

S108 functions as the Phosphoserine intermediate in the catalytic mechanism. The Mg(2+) site is built by S108, D247, D249, and D251. Position 108 is a phosphoserine (S108).

The protein belongs to the phosphohexose mutase family. It depends on Mg(2+) as a cofactor. Post-translationally, activated by phosphorylation.

The catalysed reaction is alpha-D-glucosamine 1-phosphate = D-glucosamine 6-phosphate. In terms of biological role, catalyzes the conversion of glucosamine-6-phosphate to glucosamine-1-phosphate. The protein is Phosphoglucosamine mutase of Burkholderia pseudomallei (strain 668).